The following is a 782-amino-acid chain: E3 ubiquitin-protein ligase SopA (782 aa).

The segment at 137–171 is disordered; it reads VSVSANNRPTVSEGRTPPVSPSLSLQATSSPSSPA. Residues 157–171 are compositionally biased toward low complexity; it reads PSLSLQATSSPSSPA. C753 acts as the Glycyl thioester intermediate in catalysis.

Belongs to the SopA E3 ligase family. Post-translationally, ubiquitinated in the presence of host E1 ubiquitin-activating enzyme, E2 ubiquitin-conjugating enzyme and ubiquitin.

It localises to the secreted. The protein localises to the host cell. It carries out the reaction S-ubiquitinyl-[E2 ubiquitin-conjugating enzyme]-L-cysteine + [acceptor protein]-L-lysine = [E2 ubiquitin-conjugating enzyme]-L-cysteine + N(6)-ubiquitinyl-[acceptor protein]-L-lysine.. In terms of biological role, effector proteins function to alter host cell physiology and promote bacterial survival in host tissues. This protein is an E3 ubiquitin ligase that interferes with host's ubiquitination pathway. This Salmonella enteritidis PT4 (strain P125109) protein is E3 ubiquitin-protein ligase SopA (sopA).